We begin with the raw amino-acid sequence, 463 residues long: ATP synthase subunit beta (463 aa).

152–159 (GGAGVGKT) is a binding site for ATP.

Belongs to the ATPase alpha/beta chains family. F-type ATPases have 2 components, CF(1) - the catalytic core - and CF(0) - the membrane proton channel. CF(1) has five subunits: alpha(3), beta(3), gamma(1), delta(1), epsilon(1). CF(0) has three main subunits: a(1), b(2) and c(9-12). The alpha and beta chains form an alternating ring which encloses part of the gamma chain. CF(1) is attached to CF(0) by a central stalk formed by the gamma and epsilon chains, while a peripheral stalk is formed by the delta and b chains.

It localises to the cell membrane. The enzyme catalyses ATP + H2O + 4 H(+)(in) = ADP + phosphate + 5 H(+)(out). Produces ATP from ADP in the presence of a proton gradient across the membrane. The catalytic sites are hosted primarily by the beta subunits. This chain is ATP synthase subunit beta, found in Clostridium botulinum (strain Alaska E43 / Type E3).